We begin with the raw amino-acid sequence, 323 residues long: Fructose-1,6-bisphosphatase class 1 (323 aa).

4 residues coordinate Mg(2+): E84, D103, L105, and D106. Residues 106-109 (DGSS), N198, and K264 each bind substrate. Residue E270 coordinates Mg(2+).

The protein belongs to the FBPase class 1 family. Homotetramer. Mg(2+) serves as cofactor.

Its subcellular location is the cytoplasm. It carries out the reaction beta-D-fructose 1,6-bisphosphate + H2O = beta-D-fructose 6-phosphate + phosphate. The protein operates within carbohydrate biosynthesis; gluconeogenesis. This chain is Fructose-1,6-bisphosphatase class 1, found in Pseudoalteromonas atlantica (strain T6c / ATCC BAA-1087).